The following is a 381-amino-acid chain: ATP-dependent (S)-NAD(P)H-hydrate dehydratase (381 aa).

The region spanning 84 to 376 (AEAVVRRITP…EFLGKSLEDI (293 aa)) is the YjeF C-terminal domain. (6S)-NADPHX contacts are provided by residues G197 and 250–256 (NVYEYKR). Residues 290 to 294 (KGKAD) and 309 to 318 (GSPRRCGGQG) each bind ATP. D319 contacts (6S)-NADPHX.

Belongs to the NnrD/CARKD family. Requires Mg(2+) as cofactor.

It carries out the reaction (6S)-NADHX + ATP = ADP + phosphate + NADH + H(+). The catalysed reaction is (6S)-NADPHX + ATP = ADP + phosphate + NADPH + H(+). Its function is as follows. Catalyzes the dehydration of the S-form of NAD(P)HX at the expense of ATP, which is converted to ADP. Together with NAD(P)HX epimerase, which catalyzes the epimerization of the S- and R-forms, the enzyme allows the repair of both epimers of NAD(P)HX, a damaged form of NAD(P)H that is a result of enzymatic or heat-dependent hydration. The sequence is that of ATP-dependent (S)-NAD(P)H-hydrate dehydratase from Sorghum bicolor (Sorghum).